The chain runs to 211 residues: N-(5'-phosphoribosyl)anthranilate isomerase (211 aa).

The protein belongs to the TrpF family.

The catalysed reaction is N-(5-phospho-beta-D-ribosyl)anthranilate = 1-(2-carboxyphenylamino)-1-deoxy-D-ribulose 5-phosphate. It functions in the pathway amino-acid biosynthesis; L-tryptophan biosynthesis; L-tryptophan from chorismate: step 3/5. In Chromohalobacter salexigens (strain ATCC BAA-138 / DSM 3043 / CIP 106854 / NCIMB 13768 / 1H11), this protein is N-(5'-phosphoribosyl)anthranilate isomerase.